Here is a 389-residue protein sequence, read N- to C-terminus: Cytochrome f (389 aa).

The N-terminal stretch at 1 to 42 is a signal peptide; sequence MTTFFISKVNGPVNKSLIWLKIHIYEFFLLKFMLLFPPTVCS. 4 residues coordinate heme: Tyr105, Cys125, Cys128, and His129. Residues 355–375 traverse the membrane as a helical segment; that stretch reads LQALIVFFIFVILTQLFLVLK.

The protein belongs to the cytochrome f family. In terms of assembly, the 4 large subunits of the cytochrome b6-f complex are cytochrome b6, subunit IV (17 kDa polypeptide, petD), cytochrome f and the Rieske protein, while the 4 small subunits are PetG, PetL, PetM and PetN. The complex functions as a dimer. It depends on heme as a cofactor.

It localises to the plastid. Its subcellular location is the chloroplast thylakoid membrane. Its function is as follows. Component of the cytochrome b6-f complex, which mediates electron transfer between photosystem II (PSII) and photosystem I (PSI), cyclic electron flow around PSI, and state transitions. This chain is Cytochrome f, found in Pleurastrum terricola (Filamentous green alga).